A 236-amino-acid chain; its full sequence is 15,16-dihydrobiliverdin:ferredoxin oxidoreductase (236 aa).

The protein belongs to the HY2 family.

It carries out the reaction 15,16-dihydrobiliverdin + oxidized 2[4Fe-4S]-[ferredoxin] = biliverdin IXalpha + reduced 2[4Fe-4S]-[ferredoxin] + 2 H(+). In terms of biological role, catalyzes the two-electron reduction of biliverdin IX-alpha at the C15 methine bridge. The protein is 15,16-dihydrobiliverdin:ferredoxin oxidoreductase of Prochlorococcus marinus (strain MIT 9215).